The primary structure comprises 698 residues: 4-hydroxybutyrate--CoA ligase [ADP-forming] (698 aa).

One can recognise an ATP-grasp domain in the interval 491-544 (QEVLKAYGLPLPKSTLAKNEAEAVKAAKKIGYPVVMKIASPQIIHKSDAGGVKV). Residue 517–544 (AKKIGYPVVMKIASPQIIHKSDAGGVKV) participates in ATP binding.

This sequence in the N-terminal section; belongs to the acetate CoA ligase alpha subunit family. It in the C-terminal section; belongs to the acetate CoA ligase beta subunit family. It depends on Mg(2+) as a cofactor. Requires Mn(2+) as cofactor.

It carries out the reaction 4-hydroxybutanoate + ATP + CoA = 4-hydroxybutanoyl-CoA + ADP + phosphate. Functionally, involved in thaumarchaeal hydroxypropionate/hydroxybutyrate (HP/HB) cycle, a modified version of the autotrophic HP/HB cycle of Crenarchaeota. Catalyzes the formation of 4-hydroxybutyryl-CoA, ADP and phosphate from 4-hydroxybutyrate, coenzyme A (CoA) and ATP. Can also use acetate, propionate and butyrate, with poor catalytic efficiency. This chain is 4-hydroxybutyrate--CoA ligase [ADP-forming], found in Nitrosopumilus maritimus (strain SCM1).